Consider the following 790-residue polypeptide: Lon protease (790 aa).

Positions 23 to 220 (LPIMPIFHTV…EITLIVNHQL (198 aa)) constitute a Lon N-terminal domain. 372 to 379 (GPPGTGKT) contacts ATP. The Lon proteolytic domain maps to 608 to 789 (ISKPGIAMGL…REVLNIALSR (182 aa)). Residues serine 695 and lysine 738 contribute to the active site.

This sequence belongs to the peptidase S16 family. As to quaternary structure, homohexamer. Organized in a ring with a central cavity.

The protein localises to the cytoplasm. It carries out the reaction Hydrolysis of proteins in presence of ATP.. Functionally, ATP-dependent serine protease that mediates the selective degradation of mutant and abnormal proteins as well as certain short-lived regulatory proteins. Required for cellular homeostasis and for survival from DNA damage and developmental changes induced by stress. Degrades polypeptides processively to yield small peptide fragments that are 5 to 10 amino acids long. Binds to DNA in a double-stranded, site-specific manner. The polypeptide is Lon protease (Syntrophus aciditrophicus (strain SB)).